A 346-amino-acid chain; its full sequence is Biotin synthase (346 aa).

Residues 38 to 256 (RQVQVSTLLS…IAVARIMMPT (219 aa)) enclose the Radical SAM core domain. Residues cysteine 53, cysteine 57, and cysteine 60 each contribute to the [4Fe-4S] cluster site. The [2Fe-2S] cluster site is built by cysteine 97, cysteine 128, cysteine 188, and arginine 260.

The protein belongs to the radical SAM superfamily. Biotin synthase family. In terms of assembly, homodimer. The cofactor is [4Fe-4S] cluster. [2Fe-2S] cluster serves as cofactor.

It carries out the reaction (4R,5S)-dethiobiotin + (sulfur carrier)-SH + 2 reduced [2Fe-2S]-[ferredoxin] + 2 S-adenosyl-L-methionine = (sulfur carrier)-H + biotin + 2 5'-deoxyadenosine + 2 L-methionine + 2 oxidized [2Fe-2S]-[ferredoxin]. Its pathway is cofactor biosynthesis; biotin biosynthesis; biotin from 7,8-diaminononanoate: step 2/2. Catalyzes the conversion of dethiobiotin (DTB) to biotin by the insertion of a sulfur atom into dethiobiotin via a radical-based mechanism. The sequence is that of Biotin synthase from Escherichia coli O157:H7.